The following is a 615-amino-acid chain: Protein DlpA (615 aa).

Belongs to the isocitrate and isopropylmalate dehydrogenases family. It to M.jannaschii MJ0644 in the C-terminal section.

The chain is Protein DlpA (dlpA) from Legionella pneumophila subsp. pneumophila (strain Philadelphia 1 / ATCC 33152 / DSM 7513).